A 476-amino-acid polypeptide reads, in one-letter code: MLAEIKGLNEECGVFGIWGHEEAPQITYYGLHSLQHRGQEGAGIVATDGEKLTAHKGQGLITEVFQNGELSKVKGKGAIGHVRYATAGGGGYENVQPLLFRSQNNGSLALAHNGNLVNATQLKQQLENQGSIFQTSSDTEVLAHLIKRSGHFTLKDQIKNSLSMLKGAYAFLIMTETEMIVALDPNGLRPLSIGMMGDAYVVASETCAFDVVGATYLREVEPGEMLIINDEGMKSERFSMNINRSICSMEYIYFSRPDSNIDGINVHSARKNLGKMLAQESAVEADVVTGVPDSSISAAIGYAEATGIPYELGLIKNRYVGRTFIQPSQALREQGVRMKLSAVRGVVEGKRVVMVDDSIVRGTTSRRIVTMLREAGATEVHVKISSPPIAHPCFYGIDTSTHEELIASSHSVEEIRQEIGADTLSFLSVEGLLKGIGRKYDDSNCGQCLACFTGKYPTEIYQDTVLPHVKEAVLTK.

Residues 1 to 11 constitute a propeptide that is removed on maturation; the sequence is MLAEIKGLNEE. Residue C12 is the Nucleophile of the active site. One can recognise a Glutamine amidotransferase type-2 domain in the interval 12–231; sequence CGVFGIWGHE…PGEMLIINDE (220 aa). C247 contributes to the [4Fe-4S] cluster binding site. Mg(2+)-binding residues include S294, D356, and D357. C393, C448, and C451 together coordinate [4Fe-4S] cluster.

In the C-terminal section; belongs to the purine/pyrimidine phosphoribosyltransferase family. In terms of assembly, homotetramer. The cofactor is Mg(2+). [4Fe-4S] cluster is required as a cofactor.

The enzyme catalyses 5-phospho-beta-D-ribosylamine + L-glutamate + diphosphate = 5-phospho-alpha-D-ribose 1-diphosphate + L-glutamine + H2O. It functions in the pathway purine metabolism; IMP biosynthesis via de novo pathway; N(1)-(5-phospho-D-ribosyl)glycinamide from 5-phospho-alpha-D-ribose 1-diphosphate: step 1/2. Its activity is regulated as follows. Allosterically regulated; subject to end product regulation by purine nucleotides. Catalyzes the formation of phosphoribosylamine from phosphoribosylpyrophosphate (PRPP) and glutamine. This is Amidophosphoribosyltransferase from Bacillus subtilis (strain 168).